Reading from the N-terminus, the 345-residue chain is Phosphoribosylformylglycinamidine cyclo-ligase (345 aa).

The protein belongs to the AIR synthase family.

Its subcellular location is the cytoplasm. It carries out the reaction 2-formamido-N(1)-(5-O-phospho-beta-D-ribosyl)acetamidine + ATP = 5-amino-1-(5-phospho-beta-D-ribosyl)imidazole + ADP + phosphate + H(+). It participates in purine metabolism; IMP biosynthesis via de novo pathway; 5-amino-1-(5-phospho-D-ribosyl)imidazole from N(2)-formyl-N(1)-(5-phospho-D-ribosyl)glycinamide: step 2/2. This Klebsiella pneumoniae (strain 342) protein is Phosphoribosylformylglycinamidine cyclo-ligase.